A 685-amino-acid polypeptide reads, in one-letter code: Glycine--tRNA ligase beta subunit (685 aa).

Belongs to the class-II aminoacyl-tRNA synthetase family. As to quaternary structure, tetramer of two alpha and two beta subunits.

The protein localises to the cytoplasm. The catalysed reaction is tRNA(Gly) + glycine + ATP = glycyl-tRNA(Gly) + AMP + diphosphate. The chain is Glycine--tRNA ligase beta subunit from Azotobacter vinelandii (strain DJ / ATCC BAA-1303).